The primary structure comprises 213 residues: Octanoyltransferase (213 aa).

The 176-residue stretch at 36 to 211 folds into the BPL/LPL catalytic domain; that stretch reads TNTPDEIWLV…KFCQQLGFKL (176 aa). Substrate-binding positions include 75–82, 142–144, and 155–157; these read RGGQVTYH, SLG, and GLA. Catalysis depends on Cys-173, which acts as the Acyl-thioester intermediate.

The protein belongs to the LipB family.

The protein localises to the cytoplasm. The enzyme catalyses octanoyl-[ACP] + L-lysyl-[protein] = N(6)-octanoyl-L-lysyl-[protein] + holo-[ACP] + H(+). It functions in the pathway protein modification; protein lipoylation via endogenous pathway; protein N(6)-(lipoyl)lysine from octanoyl-[acyl-carrier-protein]: step 1/2. Catalyzes the transfer of endogenously produced octanoic acid from octanoyl-acyl-carrier-protein onto the lipoyl domains of lipoate-dependent enzymes. Lipoyl-ACP can also act as a substrate although octanoyl-ACP is likely to be the physiological substrate. This chain is Octanoyltransferase, found in Photorhabdus laumondii subsp. laumondii (strain DSM 15139 / CIP 105565 / TT01) (Photorhabdus luminescens subsp. laumondii).